A 331-amino-acid chain; its full sequence is Ornithine carbamoyltransferase (331 aa).

Residues 55 to 58 (STRT), Gln82, Arg106, and 133 to 136 (HPTQ) each bind carbamoyl phosphate. Residues Asn166, Asp230, and 234-235 (SM) each bind L-ornithine. Carbamoyl phosphate contacts are provided by residues 272–273 (CL) and Arg317.

The protein belongs to the aspartate/ornithine carbamoyltransferase superfamily. OTCase family.

The protein localises to the cytoplasm. It carries out the reaction carbamoyl phosphate + L-ornithine = L-citrulline + phosphate + H(+). It participates in amino-acid biosynthesis; L-arginine biosynthesis; L-arginine from L-ornithine and carbamoyl phosphate: step 1/3. In terms of biological role, reversibly catalyzes the transfer of the carbamoyl group from carbamoyl phosphate (CP) to the N(epsilon) atom of ornithine (ORN) to produce L-citrulline. This is Ornithine carbamoyltransferase (argF) from Neisseria gonorrhoeae.